A 193-amino-acid chain; its full sequence is Putative manganese efflux pump MntP (193 aa).

Transmembrane regions (helical) follow at residues 6–26 (VVFV…GIAC), 39–59 (VAGT…YAGL), 61–81 (IADV…TVIG), 106–126 (LGLL…GLTF), 132–152 (NIGL…YLGF), and 165–185 (WVGI…LAEH).

This sequence belongs to the MntP (TC 9.B.29) family.

It is found in the cell membrane. Probably functions as a manganese efflux pump. The protein is Putative manganese efflux pump MntP of Dehalococcoides mccartyi (strain ATCC BAA-2266 / KCTC 15142 / 195) (Dehalococcoides ethenogenes (strain 195)).